Here is a 199-residue protein sequence, read N- to C-terminus: NADH-quinone oxidoreductase subunit C (199 aa).

The protein belongs to the complex I 30 kDa subunit family. NDH-1 is composed of 14 different subunits. Subunits NuoB, C, D, E, F, and G constitute the peripheral sector of the complex.

It localises to the cell inner membrane. It carries out the reaction a quinone + NADH + 5 H(+)(in) = a quinol + NAD(+) + 4 H(+)(out). In terms of biological role, NDH-1 shuttles electrons from NADH, via FMN and iron-sulfur (Fe-S) centers, to quinones in the respiratory chain. The immediate electron acceptor for the enzyme in this species is believed to be ubiquinone. Couples the redox reaction to proton translocation (for every two electrons transferred, four hydrogen ions are translocated across the cytoplasmic membrane), and thus conserves the redox energy in a proton gradient. In Rhodobacter capsulatus (Rhodopseudomonas capsulata), this protein is NADH-quinone oxidoreductase subunit C.